Here is a 298-residue protein sequence, read N- to C-terminus: ATP synthase gamma chain (298 aa).

The protein belongs to the ATPase gamma chain family. As to quaternary structure, F-type ATPases have 2 components, CF(1) - the catalytic core - and CF(0) - the membrane proton channel. CF(1) has five subunits: alpha(3), beta(3), gamma(1), delta(1), epsilon(1). CF(0) has three main subunits: a, b and c.

Its subcellular location is the cell inner membrane. Its function is as follows. Produces ATP from ADP in the presence of a proton gradient across the membrane. The gamma chain is believed to be important in regulating ATPase activity and the flow of protons through the CF(0) complex. This is ATP synthase gamma chain from Francisella tularensis subsp. holarctica (strain FTNF002-00 / FTA).